Consider the following 95-residue polypeptide: Aspartyl/glutamyl-tRNA(Asn/Gln) amidotransferase subunit C (95 aa).

It belongs to the GatC family. Heterotrimer of A, B and C subunits.

The catalysed reaction is L-glutamyl-tRNA(Gln) + L-glutamine + ATP + H2O = L-glutaminyl-tRNA(Gln) + L-glutamate + ADP + phosphate + H(+). It carries out the reaction L-aspartyl-tRNA(Asn) + L-glutamine + ATP + H2O = L-asparaginyl-tRNA(Asn) + L-glutamate + ADP + phosphate + 2 H(+). In terms of biological role, allows the formation of correctly charged Asn-tRNA(Asn) or Gln-tRNA(Gln) through the transamidation of misacylated Asp-tRNA(Asn) or Glu-tRNA(Gln) in organisms which lack either or both of asparaginyl-tRNA or glutaminyl-tRNA synthetases. The reaction takes place in the presence of glutamine and ATP through an activated phospho-Asp-tRNA(Asn) or phospho-Glu-tRNA(Gln). In Alkalilimnicola ehrlichii (strain ATCC BAA-1101 / DSM 17681 / MLHE-1), this protein is Aspartyl/glutamyl-tRNA(Asn/Gln) amidotransferase subunit C.